Here is a 302-residue protein sequence, read N- to C-terminus: Pyridoxal 5'-phosphate synthase subunit PdxS (302 aa).

D-ribose 5-phosphate is bound at residue Asp32. The active-site Schiff-base intermediate with D-ribose 5-phosphate is Lys89. Residue Gly161 coordinates D-ribose 5-phosphate. Arg173 lines the D-glyceraldehyde 3-phosphate pocket. D-ribose 5-phosphate is bound by residues Gly222 and 243 to 244 (GS). Residues 275 to 302 (IAKNPGKGMKGQANADLDEEEQLQGRGV) form a disordered region.

It belongs to the PdxS/SNZ family. As to quaternary structure, in the presence of PdxT, forms a dodecamer of heterodimers.

The catalysed reaction is aldehydo-D-ribose 5-phosphate + D-glyceraldehyde 3-phosphate + L-glutamine = pyridoxal 5'-phosphate + L-glutamate + phosphate + 3 H2O + H(+). It functions in the pathway cofactor biosynthesis; pyridoxal 5'-phosphate biosynthesis. Functionally, catalyzes the formation of pyridoxal 5'-phosphate from ribose 5-phosphate (RBP), glyceraldehyde 3-phosphate (G3P) and ammonia. The ammonia is provided by the PdxT subunit. Can also use ribulose 5-phosphate and dihydroxyacetone phosphate as substrates, resulting from enzyme-catalyzed isomerization of RBP and G3P, respectively. The sequence is that of Pyridoxal 5'-phosphate synthase subunit PdxS from Haloarcula marismortui (strain ATCC 43049 / DSM 3752 / JCM 8966 / VKM B-1809) (Halobacterium marismortui).